Consider the following 361-residue polypeptide: Free fatty acid receptor 4 (361 aa).

Over 1-45 the chain is Extracellular; the sequence is MSPECARAAGDAPLRSLEQANRTRFSFFSDVKGDHRLLLAAVETT. Asparagine 21 carries an N-linked (GlcNAc...) asparagine glycan. Residues 46–66 traverse the membrane as a helical segment; that stretch reads VLALIFAVSLLGNVCALVLVA. The Cytoplasmic portion of the chain corresponds to 67–77; sequence RRRRRGTTACL. Residues 78-98 traverse the membrane as a helical segment; that stretch reads VLNLFCADLLFISAIPLVLAV. The Extracellular portion of the chain corresponds to 99 to 112; sequence RWTEAWLLGPVACH. A disulfide bridge connects residues cysteine 111 and cysteine 194. A helical transmembrane segment spans residues 113-133; the sequence is LLFYLMTLSGSVTILTLAAVS. At 134-156 the chain is on the cytoplasmic side; the sequence is LERMVCIVHLQRGVRGPGRRARA. The chain crosses the membrane as a helical span at residues 157 to 177; it reads VLLTLIWGYSAVAALPLCVFF. The Extracellular segment spans residues 178–204; the sequence is RVVPQRLPGADQEISICTLIWPTIAGE. Residues 205 to 225 traverse the membrane as a helical segment; the sequence is ISWDVSFVTLNFLVPGLVIVI. The Cytoplasmic segment spans residues 226 to 268; it reads SYSKILQITKASRKRLTVSLAYSESHQIRVSQQDFRLFRTLFL. A helical membrane pass occupies residues 269 to 289; that stretch reads LMVSFFIMWSPIIITILLILI. Residues 290–295 lie on the Extracellular side of the membrane; sequence QNFKQD. Residues 296-316 traverse the membrane as a helical segment; that stretch reads LVIWPSLFFWVVAFTFANSAL. The Cytoplasmic segment spans residues 317 to 361; the sequence is NPILYNMTLCRNEWKKIFCCFWFPEKGAILTDTSVKRNDLSVISG. Phosphothreonine is present on residues threonine 347 and threonine 349. Residues serine 350, serine 357, and serine 360 each carry the phosphoserine modification.

Belongs to the G-protein coupled receptor 1 family. Interacts (via C-terminus) with ARRB2 following LCFAs stimulation. Post-translationally, phosphorylated at two clusters of Ser and Thr residues located in the intracellular C-terminus. Prerequisite for FFAR4 internalization via an ARRB2-dependent pathway. Highly expressed in lung and colon.

It localises to the cell membrane. The protein localises to the endosome membrane. The protein resides in the lysosome membrane. It is found in the cell projection. Its subcellular location is the cilium membrane. Functionally, G-protein-coupled receptor for long-chain fatty acids (LCFAs) with a major role in adipogenesis, energy metabolism and inflammation. Signals via G-protein and beta-arrestin pathways. LCFAs sensing initiates activation of phosphoinositidase C-linked G proteins GNAQ and GNA11 (G(q)/G(11)), inducing a variety of cellular responses via second messenger pathways such as intracellular calcium mobilization, modulation of cyclic adenosine monophosphate (cAMP) production, and mitogen-activated protein kinases (MAPKs). After LCFAs binding, associates with beta-arrestin ARRB2 that acts as an adapter protein coupling the receptor to specific downstream signaling pathways, as well as mediating receptor endocytosis. In response to dietary fats, plays an important role in the regulation of adipocyte proliferation and differentiation. Acts as a receptor for omega-3 polyunsaturated fatty acids (PUFAs) at primary cilium of perivascular preadipocytes, initiating an adipogenic program via cAMP and CTCF-dependent chromatin remodeling that ultimately results in transcriptional activation of adipogenic genes and cell cycle entry. Induces differentiation of brown and beige adipocytes probably via autocrine and endocrine functions of FGF21 hormone. Contributes to the thermogenic activation of brown adipose tissue and the browning of white adipose tissue. Activates brown adipocytes by initiating intracellular calcium signaling leading to mitochondrial depolarization and fission, and overall increased mitochondrial respiration. Consequently stimulates fatty acid uptake and oxidation in mitochondria together with UCP1-mediated thermogenic respiration, eventually reducing fat mass. Regulates bi-potential differentiation of bone marrow mesenchymal stem cells toward osteoblasts or adipocytes likely by up-regulating distinct integrins. In response to dietary fats regulates hormone secretion and appetite. Stimulates GIP and GLP1 secretion from enteroendocrine cells as well as GCG secretion in pancreatic alpha cells, thereby playing a role in the regulation of blood glucose levels. Negatively regulates glucose-induced SST secretion in pancreatic delta cells. Mediates LCFAs inhibition of GHRL secretion, an appetite-controlling hormone. In taste buds, contributes to sensing of dietary fatty acids by the gustatory system. During the inflammatory response, promotes anti-inflammatory M2 macrophage differentiation in adipose tissue. Mediates the anti-inflammatory effects of omega-3 PUFAs via inhibition of NLRP3 inflammasome activation. In this pathway, interacts with adapter protein ARRB2 and inhibits the priming step triggered by Toll-like receptors (TLRs) at the level of TAK1 and TAB1. Further inhibits the activation step when ARRB2 directly associates with NLRP3, leading to inhibition of pro-inflammatory cytokine release. Mediates LCFAs anti-apoptotic effects. In Macaca fascicularis (Crab-eating macaque), this protein is Free fatty acid receptor 4 (FFAR4).